The chain runs to 530 residues: UPF0422 protein lpp3030 (530 aa).

The N-terminal stretch at 1–19 (MKFKKIILALACLSSPLYA) is a signal peptide. A coiled-coil region spans residues 20-66 (DQDQQLKSEIQRLQHQAEDLQAQLNRLQKQLANHKSSQQKHEQQAAA). The interval 50-81 (LANHKSSQQKHEQQAAAKPAEPKSKPTTKSGA) is disordered. Residues 63 to 79 (QAAAKPAEPKSKPTTKS) are compositionally biased toward low complexity.

It belongs to the UPF0422 family.

This Legionella pneumophila (strain Paris) protein is UPF0422 protein lpp3030.